We begin with the raw amino-acid sequence, 741 residues long: MLKKIVTALGMSGMLLASSNAIAEDTTTKNDNLSPQSVDLSPLRNLNKLDSPMDKDYNYHQAFKKLDTEQLKKDMQDLLTQSQDWWPADFGNYGPFFIRLSWHDAGTYRIYDGRGGANRGQQRFSPLNSWPDNVNLDKARQLLWPIKQKYGDAVSWSDLIVLAGTVSLESMGMKPIGFAFGREDDWQGDDTNWGLSPEEIMSSNVRDGKLAPAYAATQMGLIYVNPEGPDGKPDIKGAASEIRQAFRAMGMTDKETVALIAGGHTFGKTHGAVPEDKVKQAIGPAPDKAPIEQQGLGWHNSYGTGNGDDTMGSGLEGSWTSTPTFWNHDFLHNLYNLDWKKTLSPAGAHQWTPTNAKPENMVPDAHKPGVKHKPIMFTTDLALKEDDGFNKYTQEFYNNPEEFKEEFAKAWFKLTHRDMGPKSRYIGPWIPEQNFIWQDPVPAADYKQVSTQDIAQLEQDIINSGLTNQQLIKTAWDSASTYRKTDYRGGSNGARIALAPEKDWQMNEPAKLEVVLTKLKEIQTNFNNSKTDGTKVSLADLIVLGGNVGVEQAAKQAGYNIQMPFVPGRTDATQAQTDIESFNYLKTKSDGFINYTDGSVSADKLPQTLVEKASMLDLNIPEMTVLVGGMRALDVNYDNSQEGVLTTTPGQLNNSFFVNLLDMSTQWKKSDKKDGEYIGIDRKTGKQKWTASPVDLIFGSNSELKAVAQVYAENGNEQKFVNDFAKAWHKVMMLGRFDVQQ.

A signal peptide spans 1–23 (MLKKIVTALGMSGMLLASSNAIA). A cross-link (tryptophyl-tyrosyl-methioninium (Trp-Tyr) (with M-249)) is located at residues 102-223 (WHDAGTYRIY…YAATQMGLIY (122 aa)). H103 acts as the Proton acceptor in catalysis. A cross-link (tryptophyl-tyrosyl-methioninium (Tyr-Met) (with W-102)) is located at residues 223–249 (YVNPEGPDGKPDIKGAASEIRQAFRAM). H264 is a heme b binding site.

The protein belongs to the peroxidase family. Peroxidase/catalase subfamily. Homodimer or homotetramer. It depends on heme b as a cofactor. Formation of the three residue Trp-Tyr-Met cross-link is important for the catalase, but not the peroxidase activity of the enzyme.

It catalyses the reaction H2O2 + AH2 = A + 2 H2O. The catalysed reaction is 2 H2O2 = O2 + 2 H2O. In terms of biological role, bifunctional enzyme with both catalase and broad-spectrum peroxidase activity. The chain is Catalase-peroxidase from Francisella tularensis subsp. tularensis (strain FSC 198).